A 434-amino-acid chain; its full sequence is CinA-like protein (434 aa).

This sequence belongs to the CinA family.

The polypeptide is CinA-like protein (Mycobacterium avium (strain 104)).